We begin with the raw amino-acid sequence, 137 residues long: Phospholipase A2 group V (137 aa).

The N-terminal stretch at 1-20 (MKGLLTLAWFLACSVPAVPG) is a signal peptide. 6 disulfide bridges follow: Cys-46–Cys-137, Cys-48–Cys-64, Cys-63–Cys-117, Cys-70–Cys-110, Cys-79–Cys-103, and Cys-97–Cys-108. 3 residues coordinate Ca(2+): Tyr-47, Gly-49, and Gly-51. The active site involves His-67. Position 68 (Asp-68) interacts with Ca(2+). Asp-111 is an active-site residue.

Belongs to the phospholipase A2 family. Ca(2+) is required as a cofactor. In terms of processing, this enzyme lacks one of the seven disulfide bonds found in similar PA2 proteins. Expressed in peritoneal macrophages (at protein level). Expressed in heart, skeletal muscle and white adipose tissue.

Its subcellular location is the secreted. The protein resides in the cell membrane. It localises to the cytoplasmic vesicle. The protein localises to the phagosome. It is found in the recycling endosome. Its subcellular location is the golgi apparatus. The protein resides in the cis-Golgi network. It localises to the trans-Golgi network. The enzyme catalyses a 1,2-diacyl-sn-glycero-3-phosphocholine + H2O = a 1-acyl-sn-glycero-3-phosphocholine + a fatty acid + H(+). It carries out the reaction 1-hexadecanoyl-2-(9Z-octadecenoyl)-sn-glycero-3-phosphocholine + H2O = 1-hexadecanoyl-sn-glycero-3-phosphocholine + (9Z)-octadecenoate + H(+). The catalysed reaction is 1-hexadecanoyl-2-(5Z,8Z,11Z,14Z-eicosatetraenoyl)-sn-glycero-3-phosphocholine + H2O = 1-hexadecanoyl-sn-glycero-3-phosphocholine + (5Z,8Z,11Z,14Z)-eicosatetraenoate + H(+). It catalyses the reaction 1-hexadecanoyl-2-(9Z,12Z-octadecadienoyl)-sn-glycero-3-phosphoethanolamine + H2O = 1-hexadecanoyl-sn-glycero-3-phosphoethanolamine + (9Z,12Z)-octadecadienoate + H(+). The enzyme catalyses 1-hexadecanoyl-2-(5Z,8Z,11Z,14Z-eicosatetraenoyl)-sn-glycero-3-phosphoethanolamine + H2O = 1-hexadecanoyl-sn-glycero-3-phosphoethanolamine + (5Z,8Z,11Z,14Z)-eicosatetraenoate + H(+). It carries out the reaction 1-octadecanoyl-2-(5Z,8Z,11Z,14Z-eicosatetraenoyl)-sn-glycero-3-phospho-(1D-myo-inositol) + H2O = 1-octadecanoyl-sn-glycero-3-phospho-(1D-myo-inositol) + (5Z,8Z,11Z,14Z)-eicosatetraenoate + H(+). The catalysed reaction is 1-hexadecanoyl-2-(9Z-octadecenoyl)-sn-glycero-3-phosphoglycerol + H2O = 1-hexadecanoyl-sn-glycero-3-phosphoglycerol + (9Z)-octadecenoate + H(+). It catalyses the reaction N-hexadecanoyl-1,2-di-(9Z-octadecenoyl)-sn-glycero-3-phosphoethanolamine + H2O = N-hexadecanoyl-1-(9Z-octadecenoyl)-sn-glycero-3-phosphoethanolamine + (9Z)-octadecenoate + H(+). The enzyme catalyses 1'-[1,2-di-(9Z-octadecenoyl)-sn-glycero-3-phospho]-3'-[1-(9Z-octadecenoyl)-sn-glycero-3-phospho]-glycerol + H2O = 1',3'-bis-[1-(9Z-octadecenoyl)-sn-glycero-3-phospho]-glycerol + (9Z)-octadecenoate + H(+). It carries out the reaction 1',3'-bis[1,2-di-(9Z-octadecenoyl)-sn-glycero-3-phospho]-glycerol + H2O = 1'-[1,2-di-(9Z-octadecenoyl)-sn-glycero-3-phospho]-3'-[1-(9Z-octadecenoyl)-sn-glycero-3-phospho]-glycerol + (9Z)-octadecenoate + H(+). The protein operates within lipid metabolism; phospholipid metabolism. It functions in the pathway lipid metabolism; leukotriene B4 biosynthesis. Its pathway is lipid metabolism; leukotriene C4 biosynthesis. Functionally, secretory calcium-dependent phospholipase A2 that primarily targets extracellular phospholipids. Hydrolyzes the ester bond of the fatty acyl group attached at sn-2 position of phospholipids (phospholipase A2 activity), preferentially releasing fatty acyl groups with a low degree of unsaturation such as oleoyl (C18:1) and linoleoyl (C18:2) groups. Hydrolyzes low-density lipoprotein (LDL) phospholipids releasing unsaturated fatty acids that drive macrophage polarization toward an M2 phenotype. May act in an autocrine and paracrine manner. Contributes to lipid remodeling of cellular membranes at different subcellular locations and generation of lipid mediators involved in pathogen clearance. Cleaves sn-2 fatty acyl chains of cardiolipin, a major component of the inner membrane of mitochondria and bacterial membranes. Promotes phagocytosis of bacteria in macrophages through production of lysophosphatidylethanolamines. Displays bactericidal activity against Gram-positive bacteria by directly hydrolyzing the phospholipids of the bacterial membrane. Promotes phagocytosis and killing of ingested fungi likely through controlling phagosome-lysosome fusion and phagosome maturation. Plays a role in biosynthesis of cysteinyl leukotrienes (CysLTs) in myeloid cells. In eosinophils, triggers perinuclear arachidonate release and LTC4 synthesis in a PLA2G4A-independent way. In neutrophils, amplifies CysLTs biosynthesis initiated by PLA2G4A. Promotes immune complex clearance in macrophages via stimulating synthesis of CysLTs, which act through CYSLTR1 to trigger phagocytosis. May regulate antigen processing in antigen-presenting cells. In pulmonary macrophages regulates IL33 production required for activation of group 2 innate lymphoid cells. May play a role in the biosynthesis of N-acyl ethanolamines that regulate energy metabolism. Hydrolyzes N-acyl phosphatidylethanolamines to N-acyl lysophosphatidylethanolamines, which are further cleaved by a lysophospholipase D to release N-acyl ethanolamines. This chain is Phospholipase A2 group V (Pla2g5), found in Mus musculus (Mouse).